We begin with the raw amino-acid sequence, 502 residues long: Hexokinase-9 (502 aa).

A helical membrane pass occupies residues 5 to 24 (AALASAAMAAAAVAVVSTVL). The region spanning 37-488 (RAEAVLLRDL…SGVGAALLAA (452 aa)) is the Hexokinase domain. The tract at residues 92-230 (SGGEKGMFYA…GLDMKVTALV (139 aa)) is hexokinase small subdomain. Residues Gly-106, Thr-107, and Asn-108 each contribute to the ADP site. D-glucose contacts are provided by Thr-196, Lys-197, Asn-231, and Asp-232. The segment at 231–477 (NDTVGTLAAG…PSVMIKHVND (247 aa)) is hexokinase large subdomain. Thr-255 contributes to the ADP binding site. 3 residues coordinate D-glucose: Asn-258, Glu-286, and Glu-317. An ADP-binding site is contributed by Gly-442.

The protein belongs to the hexokinase family. In terms of tissue distribution, expressed in roots, leaves, flowers, immature seeds, endosperm and seed coat.

Its subcellular location is the plastid. It localises to the chloroplast outer membrane. The catalysed reaction is a D-hexose + ATP = a D-hexose 6-phosphate + ADP + H(+). The enzyme catalyses D-fructose + ATP = D-fructose 6-phosphate + ADP + H(+). It catalyses the reaction D-glucose + ATP = D-glucose 6-phosphate + ADP + H(+). The protein operates within carbohydrate metabolism; hexose metabolism. It participates in carbohydrate degradation; glycolysis; D-glyceraldehyde 3-phosphate and glycerone phosphate from D-glucose: step 1/4. Fructose and glucose phosphorylating enzyme. In Oryza sativa subsp. japonica (Rice), this protein is Hexokinase-9 (HXK9).